The chain runs to 246 residues: Uridylate kinase (246 aa).

Lys13–Gly16 is a binding site for ATP. Position 54 (Gly54) interacts with UMP. Gly55 and Arg59 together coordinate ATP. UMP is bound by residues Asp74 and Ala135–Thr142. Residues Asn163, Tyr169, and Asp172 each coordinate ATP.

It belongs to the UMP kinase family. As to quaternary structure, homohexamer.

It localises to the cytoplasm. The enzyme catalyses UMP + ATP = UDP + ADP. It functions in the pathway pyrimidine metabolism; CTP biosynthesis via de novo pathway; UDP from UMP (UMPK route): step 1/1. Inhibited by UTP. In terms of biological role, catalyzes the reversible phosphorylation of UMP to UDP. The polypeptide is Uridylate kinase (Bifidobacterium longum (strain NCC 2705)).